The sequence spans 439 residues: Glucose-1-phosphate adenylyltransferase (439 aa).

Residues tyrosine 116, glycine 182, 197–198 (EK), and serine 215 contribute to the alpha-D-glucose 1-phosphate site.

The protein belongs to the bacterial/plant glucose-1-phosphate adenylyltransferase family. Homotetramer.

It carries out the reaction alpha-D-glucose 1-phosphate + ATP + H(+) = ADP-alpha-D-glucose + diphosphate. It functions in the pathway glycan biosynthesis; glycogen biosynthesis. Its function is as follows. Involved in the biosynthesis of ADP-glucose, a building block required for the elongation reactions to produce glycogen. Catalyzes the reaction between ATP and alpha-D-glucose 1-phosphate (G1P) to produce pyrophosphate and ADP-Glc. The protein is Glucose-1-phosphate adenylyltransferase of Pasteurella multocida (strain Pm70).